Reading from the N-terminus, the 225-residue chain is Putative amino-acid transporter YggA (225 aa).

A run of 5 helical transmembrane segments spans residues Met1 to Ala21, Leu37 to Gly57, Ser65 to Ile85, Leu116 to Phe136, and Ala150 to Leu170.

This sequence belongs to the LysE/ArgO transporter (TC 2.A.75) family.

The protein resides in the cell membrane. This Aeromonas hydrophila protein is Putative amino-acid transporter YggA.